Reading from the N-terminus, the 59-residue chain is UPF0181 protein CKO_01169 (59 aa).

This sequence belongs to the UPF0181 family.

This chain is UPF0181 protein CKO_01169, found in Citrobacter koseri (strain ATCC BAA-895 / CDC 4225-83 / SGSC4696).